The chain runs to 261 residues: MSESLRLTRNGPILEITLDRPKANAIDARTSFAMGEAFLSFRDDPHLRVAIITGAGEKFFSAGWDLKAAAEGEAPDADFGPGGFAGLTELFDLNKPVIAAVNGYAFGGGFELALAADFIICADHASFALPEAKLGIVPDSGGVLRLPKILPPAIVNDMVMTGRRMTAEEALRWGVVNRVVSPHELLDSARELARQLVQSAPLAVAALKEITRTTRDMSVEEGYRYIRSGSLRHYPAVLHSEDALEGPLAFAEKRDPEWKGH.

Glu111 serves as the catalytic Nucleophile. Glu131 acts as the Proton acceptor in catalysis.

This sequence belongs to the enoyl-CoA hydratase/isomerase family.

The catalysed reaction is (R)-carnitinyl-CoA = crotonobetainyl-CoA + H2O. Its pathway is amine and polyamine metabolism; carnitine metabolism. Functionally, catalyzes the reversible dehydration of L-carnitinyl-CoA to crotonobetainyl-CoA. This Salmonella arizonae (strain ATCC BAA-731 / CDC346-86 / RSK2980) protein is Carnitinyl-CoA dehydratase.